Reading from the N-terminus, the 318-residue chain is MSLNFLDFEKPIADLEAKIEGLRLVNQGGEFDISIEEEITKLREKSAEMSKKIFADLGAWQVSQLARHPMRPYTLDYIPRIFSEFDELAGDRAFADDKAIIGGLAMLDEQPIMVIGHQKGRDTKEKIKRNFGMPKPEGYRKALRLMEMAERFNLPIITFIDTPGAYPGVGAEERGQSEAIARNLKVMAGLKVPIICTVIGEGGSGGALAIGVGDRVNMLQYSTYSVISPEGCASILWKSADKAPLAAEAMGVAAGQIKELGLINSIVEEPLGGAHRDHDVAAANLKATIKQQLAQLKSLSVEELLDQRYERLMSFGYC.

The CoA carboxyltransferase C-terminal domain maps to 34–295 (SIEEEITKLR…KATIKQQLAQ (262 aa)).

This sequence belongs to the AccA family. In terms of assembly, acetyl-CoA carboxylase is a heterohexamer composed of biotin carboxyl carrier protein (AccB), biotin carboxylase (AccC) and two subunits each of ACCase subunit alpha (AccA) and ACCase subunit beta (AccD).

It localises to the cytoplasm. It carries out the reaction N(6)-carboxybiotinyl-L-lysyl-[protein] + acetyl-CoA = N(6)-biotinyl-L-lysyl-[protein] + malonyl-CoA. It functions in the pathway lipid metabolism; malonyl-CoA biosynthesis; malonyl-CoA from acetyl-CoA: step 1/1. Component of the acetyl coenzyme A carboxylase (ACC) complex. First, biotin carboxylase catalyzes the carboxylation of biotin on its carrier protein (BCCP) and then the CO(2) group is transferred by the carboxyltransferase to acetyl-CoA to form malonyl-CoA. This chain is Acetyl-coenzyme A carboxylase carboxyl transferase subunit alpha, found in Pseudoalteromonas atlantica (strain T6c / ATCC BAA-1087).